The chain runs to 770 residues: MKMTVDFEECLKDSPRFRAALEEVEGDVAELELKLDKLVKLCIAMIDTGKAFCVANKQFMNGIRDLAQYSSNDAVVETSLTKFSDSLQEMINFHTILFDQTQRSIKAQLQNFVKEDLRKFKDAKKQFEKVSEEKENALVKNAQVQRNKQHEVEEAANILTATRKCFRHIALDYVLQINVLQSKRRSEILKSMLSFMYAHLAFFHQGYDLFSELGPYMKDLGAQLDRLVVDAAKEKREMEQKHSTIQQKDFSSDDSKLEYNVDAANGIVMEGYLFKRASNAFKTWNRRWFSIQNNQLVYQKKFKDSPTVVVEDLRLCTVKHCEDIERRFCFEVVSPTKSCMLQADSEKLRQAWIKAVQTSIATAYREKGDESEKLDKKSSPSTGSLDSGNESKEKLLKGESALQRVQCIPGNTSCCDCGLADPRWASINLGITLCIECSGIHRSLGVHFSKVRSLTLDTWEPELLKLMCELGNDVINRVYEAKLEKMGVKKPQPGQRQEKEAYIRAKYVERKFVDKYSALLSPSEQEKRIISKSCEDQRLSHARASVHTPVKSNDSGIQQCSEDGRESLPSTVSANSLYEPEGERQESSVFLDSKHLNPGLQLYRASYEKNLPKMAEALAHGADVNWANSDENQATPLIQAVLGGSLVTCEFLLQNGANVNQRDVQGRGPLHHATVLGHTGQVCLFLKRGANQHATDEEGKDPLSIAVEAANADIVTLLRLARMNEEMRESEGLYGQPGDETYQDIFRDFSQMASNNPEKLNRFQQDSQKF.

In terms of domain architecture, BAR spans 1 to 226; that stretch reads MKMTVDFEEC…MKDLGAQLDR (226 aa). A PH domain is found at 266–361; that stretch reads GIVMEGYLFK…WIKAVQTSIA (96 aa). Residues 371–391 form a disordered region; it reads SEKLDKKSSPSTGSLDSGNES. Residues 379 to 388 are compositionally biased toward polar residues; that stretch reads SPSTGSLDSG. Phosphoserine occurs at positions 384 and 387. Residues 399–520 form the Arf-GAP domain; it reads ESALQRVQCI…KFVDKYSALL (122 aa). Residues 414–437 form a C4-type zinc finger; it reads CCDCGLADPRWASINLGITLCIEC. Residue serine 521 is modified to Phosphoserine. Residues 542–572 are disordered; that stretch reads ARASVHTPVKSNDSGIQQCSEDGRESLPSTV. Polar residues predominate over residues 550-561; that stretch reads VKSNDSGIQQCS. Phosphoserine occurs at positions 573 and 576. ANK repeat units lie at residues 632–661, 665–694, and 698–727; these read NQAT…NVNQ, QGRG…NQHA, and EGKD…NEEM. Tyrosine 734 bears the Phosphotyrosine mark. Serine 767 bears the Phosphoserine mark.

Interacts with RAB35 (GTP-bound form); the interaction is direct and probably recruits ACAP2 to membranes. Interacts with MICALL1; the interaction is indirect through RAB35.

It is found in the endosome membrane. It localises to the cell membrane. With respect to regulation, GAP activity stimulated by phosphatidylinositol 4,5-bisphosphate (PIP2) and phosphatidic acid. Its function is as follows. GTPase-activating protein (GAP) for ADP ribosylation factor 6 (ARF6). Doesn't show GAP activity for RAB35. The sequence is that of Arf-GAP with coiled-coil, ANK repeat and PH domain-containing protein 2 (Acap2) from Mus musculus (Mouse).